A 97-amino-acid polypeptide reads, in one-letter code: Single insulin-like growth factor-binding domain protein-1 (97 aa).

Positions Met-1–Ala-19 are cleaved as a signal peptide. The IGFBP N-terminal domain occupies Phe-20–Ile-96. Thr-21 carries an O-linked (GalNAc...) threonine glycan. 6 cysteine pairs are disulfide-bonded: Cys-22-Cys-45, Cys-25-Cys-47, Cys-30-Cys-48, Cys-36-Cys-51, Cys-59-Cys-75, and Cys-69-Cys-93.

Expressed in hemocytes.

The protein resides in the secreted. In terms of biological role, has a role in the innate immune system. The protein is Single insulin-like growth factor-binding domain protein-1 of Cupiennius salei (American wandering spider).